We begin with the raw amino-acid sequence, 179 residues long: M-phase-specific PLK1-interacting protein (179 aa).

Positions 1–135 (MQRQNFRPPT…RVREKRMSNE (135 aa)) are disordered. Position 37 is an asymmetric dimethylarginine (Arg37). Phosphoserine occurs at positions 40 and 47. Residue Thr51 is modified to Phosphothreonine. The residue at position 57 (Arg57) is an Omega-N-methylarginine. Asymmetric dimethylarginine occurs at positions 59 and 68. The segment covering 60–71 (PYGSSHSPRHGG) has biased composition (low complexity). Position 72 is a phosphoserine (Ser72). Arg77 bears the Asymmetric dimethylarginine mark. Residues 79–109 (GSPSPGGYPGSYSRSPAGSQQQFGYSPGQQQ) are compositionally biased toward low complexity. Phosphoserine is present on residues Ser80, Ser82, Ser93, Ser104, and Ser115. The span at 110–122 (THPQGSPRTSTPF) shows a compositional bias: polar residues. At Arg117 the chain carries Omega-N-methylarginine. A Phosphothreonine modification is found at Thr120. Residues Ser124 and Ser133 each carry the phosphoserine modification.

In terms of assembly, interacts with PLK1; phosphorylation-dependent. In terms of processing, phosphorylated during mitosis in the cell cycle probably by CDK1. As to expression, expressed at highest levels in liver and kidney; intermediate expression in skeletal muscle, pancreas, heart and placenta; low expression in brain and lung. Expressed in epidermis and hair follicles.

The protein resides in the nucleus. It is found in the cytoplasm. The protein localises to the cytoskeleton. It localises to the microtubule organizing center. Its subcellular location is the centrosome. Its function is as follows. May play a role in maintenance of cell cycle integrity by regulating mitosis or cytokinesis. This chain is M-phase-specific PLK1-interacting protein (MPLKIP), found in Homo sapiens (Human).